The sequence spans 438 residues: Asparagine--tRNA ligase (438 aa).

The protein belongs to the class-II aminoacyl-tRNA synthetase family. As to quaternary structure, homodimer.

It is found in the cytoplasm. It carries out the reaction tRNA(Asn) + L-asparagine + ATP = L-asparaginyl-tRNA(Asn) + AMP + diphosphate + H(+). The polypeptide is Asparagine--tRNA ligase (Thermus thermophilus (strain ATCC BAA-163 / DSM 7039 / HB27)).